A 296-amino-acid polypeptide reads, in one-letter code: Putative gluconeogenesis factor (296 aa).

Belongs to the gluconeogenesis factor family.

It is found in the cytoplasm. Its function is as follows. Required for morphogenesis under gluconeogenic growth conditions. The polypeptide is Putative gluconeogenesis factor (Vibrio cholerae serotype O1 (strain ATCC 39315 / El Tor Inaba N16961)).